The sequence spans 281 residues: ATP synthase subunit a (281 aa).

Transmembrane regions (helical) follow at residues 50–70, 116–136, 145–165, 172–192, 219–239, and 246–266; these read FSFT…LLLV, FFPC…QGMI, HFLI…IVGF, FLSF…LVLL, VKIL…FYFI, and FIVL…AYVF.

The protein belongs to the ATPase A chain family. In terms of assembly, F-type ATPases have 2 components, CF(1) - the catalytic core - and CF(0) - the membrane proton channel. CF(1) has five subunits: alpha(3), beta(3), gamma(1), delta(1), epsilon(1). CF(0) has three main subunits: a, b and c.

The protein resides in the mitochondrion inner membrane. Functionally, mitochondrial membrane ATP synthase (F(1)F(0) ATP synthase or Complex V) produces ATP from ADP in the presence of a proton gradient across the membrane which is generated by electron transport complexes of the respiratory chain. F-type ATPases consist of two structural domains, F(1) - containing the extramembraneous catalytic core and F(0) - containing the membrane proton channel, linked together by a central stalk and a peripheral stalk. During catalysis, ATP synthesis in the catalytic domain of F(1) is coupled via a rotary mechanism of the central stalk subunits to proton translocation. Key component of the proton channel; it may play a direct role in the translocation of protons across the membrane. This chain is ATP synthase subunit a (ATP6), found in Oenothera berteroana (Bertero's evening primrose).